We begin with the raw amino-acid sequence, 412 residues long: Probable histone-binding protein rba-1 (412 aa).

WD repeat units follow at residues 117 to 157 (NHPG…SEPK), 169 to 209 (GHEG…TISG), 219 to 259 (GHSS…PQLT), 262 to 302 (GHTA…KKMY), 306 to 346 (HHND…DPSS), and 365 to 405 (GHTG…VSSE).

The protein belongs to the WD repeat RBAP46/RBAP48/MSI1 family. As to quaternary structure, binds directly to helix 1 of the histone fold of histone H4, a region that is not accessible when H4 is in chromatin. Interacts with zft-11; the interaction is required to suppress the activation of non-neuronal genes in neurons.

The protein resides in the nucleus. Core histone-binding subunit that may target chromatin assembly factors, chromatin remodeling factors and histone deacetylases to their histone substrates in a manner that is regulated by nucleosomal DNA. Plays a role in regulating cell cycle progression. Required to repress the induction of vulval development by Ras signaling. In association with the zinc finger protein ztf-11, negatively regulates the expression of non-neuronal genes during neurogenesis. The polypeptide is Probable histone-binding protein rba-1 (Caenorhabditis elegans).